A 642-amino-acid polypeptide reads, in one-letter code: Ribosome biogenesis protein BOP1 homolog (642 aa).

The tract at residues 1–28 (MIHKRMNSTELERTSKKIDDYDSSDEED) is disordered. Basic and acidic residues predominate over residues 10-20 (ELERTSKKIDD). 6 WD repeats span residues 311-351 (GHSG…CLKT), 353-393 (SLDG…DRHR), 472-510 (RLKGLMTVLSFHPSEPFLFVGTQRYIRIYDLAKCQLKKK), 513-552 (TGSQWMSCMHVDFRGDNVFVGGHDRVFSWIDLQLSSKPWK), 556-595 (HHTAAIRGVTQHARCPLIATVSDDSTAIVYYARISSDSLK), and 612-642 (KNGLSILAAIFHPSQPWLITAHVDGSIALFT).

Belongs to the WD repeat BOP1/ERB1 family.

The protein resides in the nucleus. It localises to the nucleolus. The protein localises to the nucleoplasm. Its function is as follows. Required for maturation of ribosomal RNAs and formation of the large ribosomal subunit. The polypeptide is Ribosome biogenesis protein BOP1 homolog (Brugia malayi (Filarial nematode worm)).